A 121-amino-acid polypeptide reads, in one-letter code: Snaclec coagulation factor IX-binding protein subunit A (121 aa).

In terms of domain architecture, C-type lectin spans Y1–E120. Intrachain disulfides connect C22–C119 and C94–C111. Ca(2+) contacts are provided by S33, E35, and E39. E120 serves as a coordination point for Ca(2+).

Belongs to the snaclec family. In terms of assembly, heterodimer of subunits A and B; disulfide-linked. As to expression, expressed by the venom gland.

It localises to the secreted. In terms of biological role, anticoagulant protein which binds to the gamma-carboxyglutamic acid-domain regions of factor IX (F9) (but not factor X) in the presence of calcium with a 1 to 1 stoichiometry. The protein is Snaclec coagulation factor IX-binding protein subunit A of Gloydius halys (Chinese water mocassin).